The chain runs to 298 residues: uncharacterized protein (298 aa).

10 helical membrane passes run 5-25 (ILFGVSMILLANLCFGIMSAF), 36-56 (MENVFYRSITMTLLLLLIYPF), 76-96 (VVVGGLAMLAFFYNIEKISLA), 97-117 (TATAFSQCAPIYTVLLSPLLL), 124-144 (SALISACIGLVGVVLISDPSV), 147-167 (VGLVEIIMGILSGIFVSLAYI), 181-201 (VILAFAFGMSLLGLAGMFIDI), 216-236 (ILWISLIGISGTLGQYFLTYA), 244-264 (IIAPIEYTRIVWGLLFGLYLG), and 272-292 (SSLGVALILCSGLLIALPALL). The 125-residue stretch at 17 to 141 (LCFGIMSAFV…GLVGVVLISD (125 aa)) folds into the EamA 1 domain. In terms of domain architecture, EamA 2 spans 183 to 288 (LAFAFGMSLL…ILCSGLLIAL (106 aa)).

Belongs to the EamA transporter family.

Its subcellular location is the cell membrane. This is an uncharacterized protein from Helicobacter pylori (strain J99 / ATCC 700824) (Campylobacter pylori J99).